A 255-amino-acid chain; its full sequence is Acetylglutamate kinase (255 aa).

Substrate is bound by residues 40–41 (GG), Arg62, and Asn153.

Belongs to the acetylglutamate kinase family. ArgB subfamily.

Its subcellular location is the cytoplasm. It catalyses the reaction N-acetyl-L-glutamate + ATP = N-acetyl-L-glutamyl 5-phosphate + ADP. It participates in amino-acid biosynthesis; L-arginine biosynthesis; N(2)-acetyl-L-ornithine from L-glutamate: step 2/4. Its function is as follows. Catalyzes the ATP-dependent phosphorylation of N-acetyl-L-glutamate. The protein is Acetylglutamate kinase of Bacillus mycoides (strain KBAB4) (Bacillus weihenstephanensis).